The following is a 92-amino-acid chain: Costars family protein ST45-2 (92 aa).

Met-1 carries the N-acetylmethionine modification.

The protein belongs to the costars family.

The chain is Costars family protein ST45-2 from Eutrema halophilum (Salt cress).